The following is a 212-amino-acid chain: uncharacterized protein (212 aa).

This sequence belongs to the IIV-6 309L family.

This is an uncharacterized protein from Aedes vexans (Inland floodwater mosquito).